The chain runs to 226 residues: ATP synthase subunit a (226 aa).

The next 5 helical transmembrane spans lie at 18–38, 74–94, 100–120, 158–180, and 197–217; these read LSLN…SYWL, FISL…PYIF, LTLT…YGWI, LAVR…GNTG, and IALL…FAVL.

Belongs to the ATPase A chain family. F-type ATPases have 2 components, CF(1) - the catalytic core - and CF(0) - the membrane proton channel. CF(1) has five subunits: alpha(3), beta(3), gamma(1), delta(1), epsilon(1). CF(0) has three main subunits: a, b and c.

The protein localises to the mitochondrion inner membrane. In terms of biological role, mitochondrial membrane ATP synthase (F(1)F(0) ATP synthase or Complex V) produces ATP from ADP in the presence of a proton gradient across the membrane which is generated by electron transport complexes of the respiratory chain. F-type ATPases consist of two structural domains, F(1) - containing the extramembraneous catalytic core and F(0) - containing the membrane proton channel, linked together by a central stalk and a peripheral stalk. During catalysis, ATP synthesis in the catalytic domain of F(1) is coupled via a rotary mechanism of the central stalk subunits to proton translocation. Key component of the proton channel; it may play a direct role in the translocation of protons across the membrane. The polypeptide is ATP synthase subunit a (mt:ATPase6) (Anopheles gambiae (African malaria mosquito)).